The sequence spans 298 residues: Ribosomal protein uL3 glutamine methyltransferase (298 aa).

This sequence belongs to the protein N5-glutamine methyltransferase family. PrmB subfamily.

It carries out the reaction L-glutaminyl-[ribosomal protein uL3] + S-adenosyl-L-methionine = N(5)-methyl-L-glutaminyl-[ribosomal protein uL3] + S-adenosyl-L-homocysteine + H(+). In terms of biological role, methylates large ribosomal subunit protein uL3 on a specific glutamine residue. The sequence is that of Ribosomal protein uL3 glutamine methyltransferase from Bordetella pertussis (strain Tohama I / ATCC BAA-589 / NCTC 13251).